A 200-amino-acid chain; its full sequence is Nascent polypeptide-associated complex subunit alpha (200 aa).

Basic and acidic residues predominate over residues 1 to 19; the sequence is MADPRVEELPEEEVKKTQV. 2 disordered regions span residues 1–54 and 118–165; these read MADP…NEKK and AAQQ…EDKD. Residues 20 to 34 are compositionally biased toward acidic residues; it reads EDLDNSSDDESDIEA. The 66-residue stretch at 49–114 folds into the NAC-A/B domain; that stretch reads SRNEKKARKA…AKIEDLNASA (66 aa). Positions 127-146 are enriched in basic and acidic residues; that stretch reads AEHDHAGHTHEHEEAGKAKE. Positions 147 to 160 are enriched in acidic residues; that stretch reads EEEEDEGEEVDAEG. Positions 161-200 constitute a UBA domain; the sequence is IEDKDIELVMTQANVSRKKAIKALKENDNDIVNSIMALSI.

This sequence belongs to the NAC-alpha family. As to quaternary structure, part of the nascent polypeptide-associated complex (NAC), consisting of npc-1/egd2 and npc-2/egd1. NAC associates with ribosomes via npc-2/egd1.

Its subcellular location is the cytoplasm. The protein localises to the nucleus. Functionally, component of the nascent polypeptide-associated complex (NAC), a dynamic component of the ribosomal exit tunnel, protecting the emerging polypeptides from interaction with other cytoplasmic proteins to ensure appropriate nascent protein targeting. The NAC complex also promotes mitochondrial protein import by enhancing productive ribosome interactions with the outer mitochondrial membrane and blocks the inappropriate interaction of ribosomes translating non-secretory nascent polypeptides with translocation sites in the membrane of the endoplasmic reticulum. Npc-1/egd2 may also be involved in transcription regulation. The polypeptide is Nascent polypeptide-associated complex subunit alpha (npc-1) (Neurospora crassa (strain ATCC 24698 / 74-OR23-1A / CBS 708.71 / DSM 1257 / FGSC 987)).